The chain runs to 53 residues: Conotoxin Cal9.2f (53 aa).

Residues 1-6 (KKGVTL) constitute a propeptide that is removed on maturation. 3 cysteine pairs are disulfide-bonded: Cys15/Cys32, Cys20/Cys42, and Cys22/Cys47.

Expressed by the venom duct.

It is found in the secreted. In terms of biological role, probable neurotoxin with unknown target. Possibly targets ion channels. The polypeptide is Conotoxin Cal9.2f (Californiconus californicus (California cone)).